The chain runs to 484 residues: Sperm motility kinase 2B (484 aa).

The region spanning 8 to 256 (YVMLETIGHG…VAEVMVHPWV (249 aa)) is the Protein kinase domain. Residues 14–22 (IGHGGCSKV) and K37 contribute to the ATP site. The active-site Proton acceptor is D127. A UBA domain is found at 272-314 (PLKPNPAIVKAMGYIGFQAQDIEDSLRQRKFNETMASYCLLKK). 2 stretches are compositionally biased toward polar residues: residues 356-373 (PTSL…CGRS) and 422-434 (SSDD…TSAS). 2 disordered regions span residues 356–400 (PTSL…TMDH) and 422–450 (SSDD…RGIK).

This sequence belongs to the protein kinase superfamily. CAMK Ser/Thr protein kinase family. Smok subfamily. Testis-specific. Expressed in the testis from 22 days postpartum (22 dpp).

It carries out the reaction L-seryl-[protein] + ATP = O-phospho-L-seryl-[protein] + ADP + H(+). The catalysed reaction is L-threonyl-[protein] + ATP = O-phospho-L-threonyl-[protein] + ADP + H(+). In terms of biological role, may play a role in sperm motility, especially in the regulation of flagellar function. This chain is Sperm motility kinase 2B, found in Mus musculus (Mouse).